The chain runs to 241 residues: Leucyl/phenylalanyl-tRNA--protein transferase (241 aa).

The protein belongs to the L/F-transferase family.

It localises to the cytoplasm. The enzyme catalyses N-terminal L-lysyl-[protein] + L-leucyl-tRNA(Leu) = N-terminal L-leucyl-L-lysyl-[protein] + tRNA(Leu) + H(+). It catalyses the reaction N-terminal L-arginyl-[protein] + L-leucyl-tRNA(Leu) = N-terminal L-leucyl-L-arginyl-[protein] + tRNA(Leu) + H(+). The catalysed reaction is L-phenylalanyl-tRNA(Phe) + an N-terminal L-alpha-aminoacyl-[protein] = an N-terminal L-phenylalanyl-L-alpha-aminoacyl-[protein] + tRNA(Phe). Functionally, functions in the N-end rule pathway of protein degradation where it conjugates Leu, Phe and, less efficiently, Met from aminoacyl-tRNAs to the N-termini of proteins containing an N-terminal arginine or lysine. The sequence is that of Leucyl/phenylalanyl-tRNA--protein transferase from Neisseria meningitidis serogroup B (strain ATCC BAA-335 / MC58).